Reading from the N-terminus, the 301-residue chain is Porphobilinogen deaminase (301 aa).

S-(dipyrrolylmethanemethyl)cysteine is present on Cys242.

This sequence belongs to the HMBS family. Monomer. Dipyrromethane serves as cofactor.

It catalyses the reaction 4 porphobilinogen + H2O = hydroxymethylbilane + 4 NH4(+). It functions in the pathway porphyrin-containing compound metabolism; protoporphyrin-IX biosynthesis; coproporphyrinogen-III from 5-aminolevulinate: step 2/4. Its function is as follows. Tetrapolymerization of the monopyrrole PBG into the hydroxymethylbilane pre-uroporphyrinogen in several discrete steps. This Rickettsia akari (strain Hartford) protein is Porphobilinogen deaminase.